We begin with the raw amino-acid sequence, 739 residues long: MPTSTLLWSVGSLALSSMVLPAAASSYELVETWKGEDFLTAFDFYTGADPTNGFVTYANQSYAESTGLVKVNSNGTFYMGVDHTTKLSTNGPGRESVRIGSNKYYDEGLFIIDLQHMPGSVCGTWPAFWSTGKNWPTDGEIDIIEGVNKNEANEIVLHTSGTCQVSSQKMSGTLTSTECGEDAGTTGCVVEGTQGSSGTPFNENGGGVYAMQWTDEFLKFWFFPRGSIPSSITKGDPDVAAFGTPMAHMEGSCSIAEHFKAQQFIFDTTFCGDWAGGVYSTSGCPVSDSSSSFKSCVAYVAENPTAFAESYWEINYIKIYQTGVAASASASASHVESAASVAETISAVREGTNSVVATTTAATIAVTSTADAETATTMAGATTVAASTETSAADENGSSASTSTHYVTMTTTICPIAESSSAAAALAGGSSEATEASNSEGSPAAATPSSVTGASAEANESESTSAAVTTPSTSTGASAEANGSESSSASEAGSVAGATPSSVSTTGASGEADSSEGASAAATPSNVSSTGASAEANGSEDSSASSEAKTVAPSIPSSVTGASAEANGNDSASSNAATASNVSGASAQAGDNESTPASAGANAGSSAAPSSVSGASAEANGSEGSSSHSSGSQAGAHSYGSVPSSAAAYGRPAPSSSSHAFATAPSSTGSSRVPTSAAAANNAAAATQGSSASGSNSGSSGHGSSSATTPSTPVFTGGANKLTLGASSVLSVLAFALLA.

The first 24 residues, 1–24 (MPTSTLLWSVGSLALSSMVLPAAA), serve as a signal peptide directing secretion. Positions 31-283 (ETWKGEDFLT…WAGGVYSTSG (253 aa)) constitute a GH16 domain. Asparagine 59 and asparagine 74 each carry an N-linked (GlcNAc...) asparagine glycan. Catalysis depends on glutamate 140, which acts as the Nucleophile. The active-site Proton donor is glutamate 145. N-linked (GlcNAc...) asparagine glycosylation occurs at asparagine 396. 3 stretches are compositionally biased toward low complexity: residues 431 to 442 (SEATEASNSEGS), 452 to 499 (TGAS…AGAT), and 507 to 522 (GASG…SAAA). The tract at residues 431-718 (SEATEASNSE…TPSTPVFTGG (288 aa)) is disordered. N-linked (GlcNAc...) asparagine glycans are attached at residues asparagine 459 and asparagine 482. Residues 523–532 (TPSNVSSTGA) are compositionally biased toward polar residues. N-linked (GlcNAc...) asparagine glycosylation is found at asparagine 526 and asparagine 537. A compositionally biased stretch (polar residues) spans 539 to 548 (SEDSSASSEA). Positions 561–587 (GASAEANGNDSASSNAATASNVSGASA) are enriched in low complexity. Residues asparagine 569, asparagine 581, asparagine 592, and asparagine 620 are each glycosylated (N-linked (GlcNAc...) asparagine). Low complexity predominate over residues 597–641 (ASAGANAGSSAAPSSVSGASAEANGSEGSSSHSSGSQAGAHSYGS). The segment covering 654-673 (PSSSSHAFATAPSSTGSSRV) has biased composition (polar residues). The span at 674–713 (PTSAAAANNAAAATQGSSASGSNSGSSGHGSSSATTPSTP) shows a compositional bias: low complexity. Glycine 717 carries the GPI-anchor amidated glycine lipid modification. A propeptide spans 718-739 (GANKLTLGASSVLSVLAFALLA) (removed in mature form).

The protein belongs to the glycosyl hydrolase 16 family.

The protein localises to the cell membrane. It carries out the reaction Endohydrolysis of (1-&gt;3)- or (1-&gt;4)-linkages in beta-D-glucans when the glucose residue whose reducing group is involved in the linkage to be hydrolyzed is itself substituted at C-3.. In terms of biological role, mixed-linked glucanase involved in the degradation of complex natural cellulosic substrates. This chain is Probable endo-1,3(4)-beta-glucanase An02g00850, found in Aspergillus niger (strain ATCC MYA-4892 / CBS 513.88 / FGSC A1513).